We begin with the raw amino-acid sequence, 69 residues long: Large ribosomal subunit protein uL29 (69 aa).

It belongs to the universal ribosomal protein uL29 family.

This chain is Large ribosomal subunit protein uL29, found in Mycoplasmopsis agalactiae (strain NCTC 10123 / CIP 59.7 / PG2) (Mycoplasma agalactiae).